Consider the following 2242-residue polypeptide: Large tegument protein deneddylase (2242 aa).

A deubiquitination activity region spans residues 1-238; sequence MKVTQASCHQ…IDLTGVVRES (238 aa). The Peptidase C76 domain maps to 4–226; that stretch reads TQASCHQGDI…AARLVSTYRD (223 aa). Residues Cys24, Asp160, and His162 contribute to the active site. The interval 239–318 is disordered; the sequence is ADTAATTTTA…KTLATASSSS (80 aa). The segment covering 240–250 has biased composition (low complexity); sequence DTAATTTTAAP. Over residues 251 to 268 the composition is skewed to pro residues; the sequence is SLPPLPDPIVDPGCPPGV. The span at 304–318 shows a compositional bias: low complexity; the sequence is PSTTSKTLATASSSS. An interaction with inner tegument protein region spans residues 328 to 332; it reads SSAVP. Polar residues predominate over residues 1173-1190; the sequence is SQQKMEGQLQETRQQMTE. The segment at 1173 to 1229 is disordered; it reads SQQKMEGQLQETRQQMTETSERLDRSLRQDPGSSSVTRVPEKPFKGQELAGRITPPP. The segment covering 1191-1200 has biased composition (basic and acidic residues); it reads TSERLDRSLR.

It belongs to the herpesviridae large tegument protein family. As to quaternary structure, interacts with host CUL1 and CUL4A; these interactions inhibit the E3 ligase activity of cullins. Interacts with inner tegument protein. Interacts with capsid vertex specific component CVC2. Interacts with the major capsid protein/MCP.

It localises to the virion tegument. The protein localises to the host cytoplasm. The protein resides in the host nucleus. The catalysed reaction is Thiol-dependent hydrolysis of ester, thioester, amide, peptide and isopeptide bonds formed by the C-terminal Gly of ubiquitin (a 76-residue protein attached to proteins as an intracellular targeting signal).. Its function is as follows. Large tegument protein that plays multiple roles in the viral cycle. During viral entry, remains associated with the capsid while most of the tegument is detached and participates in the capsid transport toward the host nucleus. Plays a role in the routing of the capsid at the nuclear pore complex and subsequent uncoating. Within the host nucleus, acts as a deneddylase and promotes the degradation of nuclear CRLs (cullin-RING ubiquitin ligases) and thereby stabilizes nuclear CRL substrates, while cytoplasmic CRLs remain unaffected. These modifications prevent host cell cycle S-phase progression and create a favorable environment allowing efficient viral genome replication. Participates later in the secondary envelopment of capsids. Indeed, plays a linker role for the association of the outer viral tegument to the capsids together with the inner tegument protein. This is Large tegument protein deneddylase from Homo sapiens (Human).